The following is a 904-amino-acid chain: MKTAAQIRELFLRFFEEKAHRRVPSSSLVPQNDPTLLFTNAGMNQFKDVFTGREKRDYSRATTAQKCVRAGGKHNDLENVGFTARHHTFFEMLGNFSFGDYFKKEAIAWAWELVTSERWLAISKERLAATVFAGEGTLPWDEEAYRLWEAQGVPPERIHKLGAKDNFWAMGDTGPCGPCSELHFFQGNDIPCAEEKAGRTCQGVACDCDRWLEIWNLVFMQFERGADGGLTPLPKPSIDTGAGLERMAAVVQGKRSNYDIDAFQSIIRAIEKLAGKRYGATDADDDVSMRVIADHARATTFLVGDGVLPANEGRGYVLRRIMRRAIRHGKRLGLERPFLADVCEAVMEEMGGAYPETRENRAFIVKVAGQEEESFRRTLDKGLAILETEMRKAIPPETHLGKPATPPPSAPRPVIDGKLAFQLYDTFGFPLDLTRVIAAERGFDVDEQGFDRNMAEQRARSEWKGSGEQAVGDLHKQIASELGETRFLGYEAPTARAEVKALLANGARAAKAARGDKVEVVTAATPFYGESGGQVGDQGSIAAPGGRVRVEDTRRPVPGLVTHVGVVEEGELAVGDLVELAVDDRRRDLIRANHSATHLLQLALRETLGDHVKQAGSIVAPDYLRFDFSHFQPLSEEELNAIERRVNELVRENAETETAVLKLEDARQSGAMMIFGEKYGDVVRVVRLGPSKELCGGTHVRRTGDIAFFKIGSEESIAAGVRRIVAYTGPQAIELSQREADELRRAAALFKAGAFEVAQKIEQTQKRVKDLERALDEAKGKIASAQSGDLAAQARDVKGAKVLAVRVQGDGKSLRELADKLRDRLGTGVVALGAEQDGKAILLVAVTKDLTARLKAGELVKEAAKLVGGSGGGKPDLAQAGGSDPAGLEKALAKVQELAVAALG.

4 residues coordinate Zn(2+): His594, His598, Cys695, and His699.

The protein belongs to the class-II aminoacyl-tRNA synthetase family. Requires Zn(2+) as cofactor.

Its subcellular location is the cytoplasm. The catalysed reaction is tRNA(Ala) + L-alanine + ATP = L-alanyl-tRNA(Ala) + AMP + diphosphate. Catalyzes the attachment of alanine to tRNA(Ala) in a two-step reaction: alanine is first activated by ATP to form Ala-AMP and then transferred to the acceptor end of tRNA(Ala). Also edits incorrectly charged Ser-tRNA(Ala) and Gly-tRNA(Ala) via its editing domain. The sequence is that of Alanine--tRNA ligase from Anaeromyxobacter sp. (strain Fw109-5).